The sequence spans 256 residues: Small ribosomal subunit protein uS2 (256 aa).

The protein belongs to the universal ribosomal protein uS2 family.

The polypeptide is Small ribosomal subunit protein uS2 (Brucella abortus (strain S19)).